Consider the following 432-residue polypeptide: Sphingosine N-acyltransferase-like protein ALT7 (432 aa).

A helical transmembrane segment spans residues 55 to 75; it reads IGLSLGSLLLLILMFTCLPYY. N-linked (GlcNAc...) asparagine glycosylation occurs at Asn-77. Transmembrane regions (helical) follow at residues 91 to 111, 128 to 148, 172 to 192, 226 to 246, 250 to 270, 273 to 293, and 338 to 358; these read FIFS…IYLL, FTEQ…GMYI, GLTK…IVVV, VGNV…FAKL, LGFQ…WLVA, GLYL…MPYG, and AFLG…GMIL. Residues 123–366 form the TLC domain; it reads KLMVRFTEQG…ILKVAYKVFQ (244 aa). Positions 370-395 are disordered; sequence ADDTRSDSEESGYGTSDHEGDCYGAQ.

It belongs to the sphingosine N-acyltransferase family.

It localises to the membrane. It functions in the pathway mycotoxin biosynthesis. Functionally, sphingosine N-acyltransferase-like protein; part of the gene cluster that mediates the biosynthesis of the host-selective toxins (HSTs) AAL-toxins, sphinganine-analog mycotoxins responsible for Alternaria stem canker on tomato by the tomato pathotype. The biosynthesis starts with the polyketide synthase ALT1-catalyzed C-16 carbon chain assembly from one starter acetyl-CoA unit with malonyl-CoA extender units. ALT1 also selectively transfers methyl groups at the first and the third cycle of chain elongation for AAL toxin. The C-16 polyketide chain is released from the enzyme by a nucleophilic attack of a carbanion, which is derived from R-carbon of glycin by decarboxylation, on the carbonyl carbon of polyketide acyl chain. This step is probably catalyzed by a pyridoxal 5'-phosphate-dependent aminoacyl transferase ALT4. The respective functions of the other enzymes encoded by the cluster have still to be elucidated. The sphingosine N-acyltransferase-like protein ALT7 seems not to act as a resistance/self-tolerance factor against the toxin in the toxin biosynthetic gene cluster, contrary to what is expected. This Alternaria alternata (Alternaria rot fungus) protein is Sphingosine N-acyltransferase-like protein ALT7.